Reading from the N-terminus, the 132-residue chain is MDCPSNVVLLLLQLVLQRQQTLAHRDKSVDLQTLLKDPVIDNDVLVEFKTHKLVQLYGPQYCRDISLRGLKTMVTDIFANGIPKNAQSSGNDQPVTVVDLANYYYMQRINELQNTELPQLKEALLTRLEHMI.

Belongs to the SWC7 family. As to quaternary structure, component of the SWR1 chromatin remodeling complex composed of at least ACT1, ARP4, RVB1, RVB2, ARP6, YAF9, VPS71, VPS72, SWC3, SWC4, SWC5, SWC7 and SWR1, and perhaps BDF1.

It is found in the nucleus. In terms of biological role, component of the SWR1 complex which mediates the ATP-dependent exchange of histone H2A for the H2A variant HZT1 leading to transcriptional regulation of selected genes by chromatin remodeling. The chain is SWR1-complex protein 7 (SWC7) from Saccharomyces cerevisiae (strain ATCC 204508 / S288c) (Baker's yeast).